A 283-amino-acid chain; its full sequence is Interferon alpha-inducible protein 27-like protein 2B (283 aa).

Residues 1–90 constitute a mitochondrion transit peptide; it reads MKRKFVGAAI…AVGTATGARA (90 aa). The disordered stretch occupies residues 90–120; the sequence is AEGSMGASREQESGPQDPPQELQEPQEPPSC. The next 3 helical transmembrane spans lie at 130–150, 176–196, and 202–222; these read FVGA…ALSA, GGGI…ILGL, and IILG…MGAC. The tract at residues 227 to 283 is disordered; it reads PGLQDLQQEPKEPQEPQELQKQQEPQEPQELQKQQETQETQETQELQKTQEPPSYEK. Over residues 242–283 the composition is skewed to low complexity; it reads PQELQKQQEPQEPQELQKQQETQETQETQELQKTQEPPSYEK.

This sequence belongs to the IFI6/IFI27 family. As to quaternary structure, homooligomer. Interacts with BAK1. Interacts with BAX. Interacts with adenine nucleotide translocase.

The protein resides in the mitochondrion inner membrane. In terms of biological role, functions in the intrinsic apoptotic signaling pathway and may have an interferon-induced antiviral activity. The protein is Interferon alpha-inducible protein 27-like protein 2B of Mus musculus (Mouse).